The sequence spans 440 residues: Transposon Ty1-PR3 Gag polyprotein (440 aa).

Polar residues-rich tracts occupy residues 1–23 (MESQ…SVTS), 48–60 (TKAN…TPAS), and 127–152 (QSQF…GNTF). Disordered regions lie at residues 1–93 (MESQ…MMTQ), 126–173 (PQSQ…RPPP), and 352–440 (GSRN…PGTY). Residues 153-165 (TDSSSADSDMTST) are compositionally biased toward low complexity. Residues 299–401 (NNGIHINNKV…NSKSKTARAH (103 aa)) form an RNA-binding region. Residues 402 to 418 (NVSTSNNSPSTDNDSIS) are compositionally biased toward low complexity. A Phosphoserine modification is found at Ser416. Positions 419 to 428 (KSTTEPIQLN) are enriched in polar residues. Basic and acidic residues predominate over residues 429–440 (NKHDLHLRPGTY).

Homotrimer.

It is found in the cytoplasm. Its function is as follows. Capsid protein (CA) is the structural component of the virus-like particle (VLP), forming the shell that encapsulates the retrotransposons dimeric RNA genome. The particles are assembled from trimer-clustered units and there are holes in the capsid shells that allow for the diffusion of macromolecules. CA also has nucleocapsid-like chaperone activity, promoting primer tRNA(i)-Met annealing to the multipartite primer-binding site (PBS), dimerization of Ty1 RNA and initiation of reverse transcription. The polypeptide is Transposon Ty1-PR3 Gag polyprotein (TY1A-PR3) (Saccharomyces cerevisiae (strain ATCC 204508 / S288c) (Baker's yeast)).